The following is a 261-amino-acid chain: Thiazole synthase (261 aa).

Catalysis depends on Lys98, which acts as the Schiff-base intermediate with DXP. Residues Gly159, 185-186 (AG), and 207-208 (AS) each bind 1-deoxy-D-xylulose 5-phosphate.

Belongs to the ThiG family. In terms of assembly, homotetramer. Forms heterodimers with either ThiH or ThiS.

The protein resides in the cytoplasm. The enzyme catalyses [ThiS sulfur-carrier protein]-C-terminal-Gly-aminoethanethioate + 2-iminoacetate + 1-deoxy-D-xylulose 5-phosphate = [ThiS sulfur-carrier protein]-C-terminal Gly-Gly + 2-[(2R,5Z)-2-carboxy-4-methylthiazol-5(2H)-ylidene]ethyl phosphate + 2 H2O + H(+). Its pathway is cofactor biosynthesis; thiamine diphosphate biosynthesis. Catalyzes the rearrangement of 1-deoxy-D-xylulose 5-phosphate (DXP) to produce the thiazole phosphate moiety of thiamine. Sulfur is provided by the thiocarboxylate moiety of the carrier protein ThiS. In vitro, sulfur can be provided by H(2)S. This Mycobacterium leprae (strain Br4923) protein is Thiazole synthase.